The sequence spans 174 residues: NADH-ubiquinone oxidoreductase chain 6 (174 aa).

The next 5 membrane-spanning stretches (helical) occupy residues 4-24 (LIIMTICLIISFIFMQMKHPL), 25-45 (SMGLMLLTQTFLTCLLTGIYV), 48-68 (FWFSYVLFLIFLGGMLILFIY), 82-102 (FNLTTLSLLIFFLMTLFFFII), and 143-163 (LITLLLINYLFLTLLVTVKIT).

It belongs to the complex I subunit 6 family.

Its subcellular location is the mitochondrion membrane. It carries out the reaction a ubiquinone + NADH + 5 H(+)(in) = a ubiquinol + NAD(+) + 4 H(+)(out). In terms of biological role, core subunit of the mitochondrial membrane respiratory chain NADH dehydrogenase (Complex I) that is believed to belong to the minimal assembly required for catalysis. Complex I functions in the transfer of electrons from NADH to the respiratory chain. The immediate electron acceptor for the enzyme is believed to be ubiquinone. This chain is NADH-ubiquinone oxidoreductase chain 6 (ND6), found in Anopheles quadrimaculatus (Common malaria mosquito).